The sequence spans 273 residues: Vacuolar iron transporter (273 aa).

The Cytoplasmic portion of the chain corresponds to 1-47 (MGKQKIIDARKAYYEGDIEKSKEIHSHYHNLDKHAEHHSLDKDHLKT). The chain crosses the membrane as a helical span at residues 48-68 (IIFGSLDGIITIFAIVSGCVG). The Vacuolar segment spans residues 69 to 72 (ANIT). Residues 73 to 93 (PAQVIIIGVGNLFANAISMGF) form a helical membrane-spanning segment. Residues 94 to 181 (SEYTSSTAQI…NEDKSEAFKK (88 aa)) are Cytoplasmic-facing. Fe cation-binding residues include glutamate 113, glutamate 116, glutamate 124, glutamate 127, methionine 161, and glutamate 165. A helical membrane pass occupies residues 182-202 (GILMFLSFCFFGMIPLFSYVL). The Vacuolar segment spans residues 203 to 212 (YNLFFSAENY). The helical transmembrane segment at 213-233 (TSSFAVVFISTLITLFILGLF) threads the bilayer. At 234 to 246 (KSQFTTQKPIVCA) the chain is on the cytoplasmic side. A helical membrane pass occupies residues 247 to 267 (LSMVLNGSIAGMLPFLFGVLL). The Vacuolar portion of the chain corresponds to 268 to 273 (KTNSGD).

It belongs to the CCC1 family. In terms of assembly, monomer.

It localises to the vacuole membrane. Its subcellular location is the endoplasmic reticulum membrane. It catalyses the reaction Fe(2+)(in) = Fe(2+)(out). Its function is as follows. Vacuolar iron transporter involved in the transfer of iron ions from the cytosol to the vacuole for intracellular iron storage. Involved in detoxification of excess iron. The transport mechanism is not well defined and the role of protons is not clear. This chain is Vacuolar iron transporter, found in Plasmodium berghei (strain Anka).